The sequence spans 156 residues: SsrA-binding protein (156 aa).

The protein belongs to the SmpB family.

It is found in the cytoplasm. In terms of biological role, required for rescue of stalled ribosomes mediated by trans-translation. Binds to transfer-messenger RNA (tmRNA), required for stable association of tmRNA with ribosomes. tmRNA and SmpB together mimic tRNA shape, replacing the anticodon stem-loop with SmpB. tmRNA is encoded by the ssrA gene; the 2 termini fold to resemble tRNA(Ala) and it encodes a 'tag peptide', a short internal open reading frame. During trans-translation Ala-aminoacylated tmRNA acts like a tRNA, entering the A-site of stalled ribosomes, displacing the stalled mRNA. The ribosome then switches to translate the ORF on the tmRNA; the nascent peptide is terminated with the 'tag peptide' encoded by the tmRNA and targeted for degradation. The ribosome is freed to recommence translation, which seems to be the essential function of trans-translation. This is SsrA-binding protein from Clostridium botulinum (strain Alaska E43 / Type E3).